The chain runs to 249 residues: Coproheme decarboxylase (249 aa).

Residues R131, Y145–K149, H172, Q185, and S223 each bind Fe-coproporphyrin III. Y145 is an active-site residue.

The protein belongs to the ChdC family. Type 1 subfamily. The cofactor is Fe-coproporphyrin III.

It carries out the reaction Fe-coproporphyrin III + 2 H2O2 + 2 H(+) = heme b + 2 CO2 + 4 H2O. The catalysed reaction is Fe-coproporphyrin III + H2O2 + H(+) = harderoheme III + CO2 + 2 H2O. The enzyme catalyses harderoheme III + H2O2 + H(+) = heme b + CO2 + 2 H2O. It participates in porphyrin-containing compound metabolism; protoheme biosynthesis. In terms of biological role, involved in coproporphyrin-dependent heme b biosynthesis. Catalyzes the decarboxylation of Fe-coproporphyrin III (coproheme) to heme b (protoheme IX), the last step of the pathway. The reaction occurs in a stepwise manner with a three-propionate intermediate. This chain is Coproheme decarboxylase, found in Thermus thermophilus (strain ATCC BAA-163 / DSM 7039 / HB27).